We begin with the raw amino-acid sequence, 81 residues long: Sulfur carrier protein TusA (81 aa).

Cys-19 acts as the Cysteine persulfide intermediate in catalysis.

Belongs to the sulfur carrier protein TusA family.

The protein resides in the cytoplasm. Its function is as follows. Sulfur carrier protein which probably makes part of a sulfur-relay system. The chain is Sulfur carrier protein TusA from Shewanella oneidensis (strain ATCC 700550 / JCM 31522 / CIP 106686 / LMG 19005 / NCIMB 14063 / MR-1).